The following is a 283-amino-acid chain: Thymidylate synthase (283 aa).

DUMP is bound at residue Arg22. The Nucleophile role is filled by Cys160. Residues 180 to 183 (RSCD), Asn191, and 221 to 223 (HIY) contribute to the dUMP site. Asp183 provides a ligand contact to (6R)-5,10-methylene-5,6,7,8-tetrahydrofolate. Ser282 contributes to the (6R)-5,10-methylene-5,6,7,8-tetrahydrofolate binding site.

This sequence belongs to the thymidylate synthase family. Bacterial-type ThyA subfamily. Homodimer.

Its subcellular location is the cytoplasm. It catalyses the reaction dUMP + (6R)-5,10-methylene-5,6,7,8-tetrahydrofolate = 7,8-dihydrofolate + dTMP. It participates in pyrimidine metabolism; dTTP biosynthesis. Functionally, catalyzes the reductive methylation of 2'-deoxyuridine-5'-monophosphate (dUMP) to 2'-deoxythymidine-5'-monophosphate (dTMP) while utilizing 5,10-methylenetetrahydrofolate (mTHF) as the methyl donor and reductant in the reaction, yielding dihydrofolate (DHF) as a by-product. This enzymatic reaction provides an intracellular de novo source of dTMP, an essential precursor for DNA biosynthesis. This Marinomonas sp. (strain MWYL1) protein is Thymidylate synthase.